The chain runs to 268 residues: Magnesium dechelatase SGR1, chloroplastic (268 aa).

A chloroplast-targeting transit peptide spans 1–48; it reads MCSLSAIMLLPTKLKPAYSDKRSNSSSSSSLFFNNRRSKKKNQSIVPV.

It belongs to the staygreen family. In terms of assembly, interacts with HCAR, the chlorophyll catabolic enzymes (CCEs) NYC1, PAO and RCCR, and the LHCII complex. Part of a SGR1-CCE-LHCII complex, which acts in chlorophyll breakdown. Expressed in roots, leaves, seeds, flowers, buds, petals, sepals and siliques.

The protein localises to the plastid. The protein resides in the chloroplast thylakoid membrane. The catalysed reaction is chlorophyll a + 2 H(+) = pheophytin a + Mg(2+). Functionally, magnesium chelatase involved in chlorophyll a degradation in the chlorophyll-protein complexes of photosystem I (PSI) and photosystem II (PSII). Contributes to the degradation of PSI and PSII in the thylakoid membranes. Required to trigger chlorophyll degradation during natural and dark-induced leaf senescence. Mediates chlorophyll degradation during embryo degreening. Recombinant SGR1 possesses high dechelating activity against chlorophyll a, very low activity against chlorophyllide a, and no activity against chlorophyll b. Magnesium dechelation of chlorophyll a by SGR1 activates chlorophyll b degradation by inducing the expression of NYC1, an enzyme involved in chlorophyll b degradation. The polypeptide is Magnesium dechelatase SGR1, chloroplastic (Arabidopsis thaliana (Mouse-ear cress)).